The chain runs to 747 residues: Ion-translocating oxidoreductase complex subunit C (747 aa).

4Fe-4S ferredoxin-type domains lie at 368–397 and 407–436; these read MEPV…QQLY and KARN…VQYY. 8 residues coordinate [4Fe-4S] cluster: C377, C380, C383, C387, C416, C419, C422, and C426. Residues 538-564 are disordered; it reads VREERARENQTQQETPTVDVPSTELDD.

It belongs to the 4Fe4S bacterial-type ferredoxin family. RnfC subfamily. The complex is composed of six subunits: RnfA, RnfB, RnfC, RnfD, RnfE and RnfG. Requires [4Fe-4S] cluster as cofactor.

Its subcellular location is the cell inner membrane. Part of a membrane-bound complex that couples electron transfer with translocation of ions across the membrane. This is Ion-translocating oxidoreductase complex subunit C from Pectobacterium carotovorum subsp. carotovorum (strain PC1).